The sequence spans 342 residues: S-adenosylmethionine:tRNA ribosyltransferase-isomerase (342 aa).

It belongs to the QueA family. Monomer.

The protein localises to the cytoplasm. The catalysed reaction is 7-aminomethyl-7-carbaguanosine(34) in tRNA + S-adenosyl-L-methionine = epoxyqueuosine(34) in tRNA + adenine + L-methionine + 2 H(+). It participates in tRNA modification; tRNA-queuosine biosynthesis. In terms of biological role, transfers and isomerizes the ribose moiety from AdoMet to the 7-aminomethyl group of 7-deazaguanine (preQ1-tRNA) to give epoxyqueuosine (oQ-tRNA). The protein is S-adenosylmethionine:tRNA ribosyltransferase-isomerase of Streptococcus pneumoniae (strain Hungary19A-6).